A 110-amino-acid chain; its full sequence is Iron-sulfur cluster assembly protein CyaY (110 aa).

This sequence belongs to the frataxin family.

Involved in iron-sulfur (Fe-S) cluster assembly. May act as a regulator of Fe-S biogenesis. The sequence is that of Iron-sulfur cluster assembly protein CyaY from Pseudomonas putida (strain ATCC 700007 / DSM 6899 / JCM 31910 / BCRC 17059 / LMG 24140 / F1).